Consider the following 881-residue polypeptide: DNA mismatch repair protein MutS (881 aa).

605–612 (GPNMSGKS) is a binding site for ATP.

Belongs to the DNA mismatch repair MutS family.

This protein is involved in the repair of mismatches in DNA. It is possible that it carries out the mismatch recognition step. This protein has a weak ATPase activity. In Limosilactobacillus reuteri subsp. reuteri (strain JCM 1112) (Lactobacillus reuteri), this protein is DNA mismatch repair protein MutS.